The sequence spans 492 residues: MO25-like protein 3 (492 aa).

The disordered stretch occupies residues 442 to 492 (SRAGIRFGETRNVKGSPRSRSQSPRPPTGPEPSPRTTSYQNVRFPPEDSSR). A compositionally biased stretch (pro residues) spans 465–474 (PRPPTGPEPS).

The protein belongs to the Mo25 family.

This Caenorhabditis briggsae protein is MO25-like protein 3.